The chain runs to 220 residues: 26S proteasome non-ATPase regulatory subunit 9 (220 aa).

Coiled coils occupy residues 4-32 (GTTTKERLERLINAKKQLEAQINRNGQIL) and 61-91 (RLARQTIICLQNDHKELMNQIQTLLNQYHSE). The region spanning 102 to 200 (RASALDLDSD…QLDLILVPKT (99 aa)) is the PDZ domain.

Belongs to the proteasome subunit p27 family. As to quaternary structure, interacts with PI31; this interaction is increased by PI31 ADP-ribosylation. Interacts with Rpt5.

Acts as a chaperone during the assembly of the 26S proteasome, specifically of the base subcomplex of the PA700/19S regulatory complex (RC). The polypeptide is 26S proteasome non-ATPase regulatory subunit 9 (Drosophila melanogaster (Fruit fly)).